We begin with the raw amino-acid sequence, 421 residues long: Acetate kinase (421 aa).

Residue Asn7 coordinates Mg(2+). Residue Lys14 participates in ATP binding. Arg91 is a binding site for substrate. The Proton donor/acceptor role is filled by Asp148. ATP is bound by residues 208 to 212 and 283 to 285; these read HIGNG and DRR. Residue Glu387 coordinates Mg(2+).

The protein belongs to the acetokinase family. Homodimer. Mg(2+) is required as a cofactor. Mn(2+) serves as cofactor.

The protein resides in the cytoplasm. It carries out the reaction acetate + ATP = acetyl phosphate + ADP. The protein operates within metabolic intermediate biosynthesis; acetyl-CoA biosynthesis; acetyl-CoA from acetate: step 1/2. Its function is as follows. Catalyzes the formation of acetyl phosphate from acetate and ATP. Can also catalyze the reverse reaction. This is Acetate kinase from Trichlorobacter lovleyi (strain ATCC BAA-1151 / DSM 17278 / SZ) (Geobacter lovleyi).